The following is a 290-amino-acid chain: Light-independent protochlorophyllide reductase iron-sulfur ATP-binding protein (290 aa).

ATP is bound by residues 10-15 and lysine 39; that span reads GIGKST. Serine 14 serves as a coordination point for Mg(2+). [4Fe-4S] cluster contacts are provided by cysteine 95 and cysteine 129. 180-181 provides a ligand contact to ATP; that stretch reads NR.

Belongs to the NifH/BchL/ChlL family. In terms of assembly, homodimer. Protochlorophyllide reductase is composed of three subunits; ChlL, ChlN and ChlB. It depends on [4Fe-4S] cluster as a cofactor.

The protein localises to the plastid. It is found in the chloroplast. It catalyses the reaction chlorophyllide a + oxidized 2[4Fe-4S]-[ferredoxin] + 2 ADP + 2 phosphate = protochlorophyllide a + reduced 2[4Fe-4S]-[ferredoxin] + 2 ATP + 2 H2O. It functions in the pathway porphyrin-containing compound metabolism; chlorophyll biosynthesis (light-independent). Component of the dark-operative protochlorophyllide reductase (DPOR) that uses Mg-ATP and reduced ferredoxin to reduce ring D of protochlorophyllide (Pchlide) to form chlorophyllide a (Chlide). This reaction is light-independent. The L component serves as a unique electron donor to the NB-component of the complex, and binds Mg-ATP. The protein is Light-independent protochlorophyllide reductase iron-sulfur ATP-binding protein of Porphyra purpurea (Red seaweed).